The sequence spans 670 residues: Carnitine O-acetyltransferase, mitochondrial (670 aa).

The Proton acceptor role is filled by His378. CoA is bound by residues Lys461 and Lys465–Asp472. Position 494 (Tyr494) interacts with (R)-carnitine. Ser498 serves as a coordination point for CoA. Thr507 contacts (R)-carnitine. Residue Gln597 participates in CoA binding. A Microbody targeting signal motif is present at residues Ala668–Leu670.

It belongs to the carnitine/choline acetyltransferase family.

The protein localises to the mitochondrion inner membrane. Its subcellular location is the peroxisome. It catalyses the reaction (R)-carnitine + acetyl-CoA = O-acetyl-(R)-carnitine + CoA. Its function is as follows. Carnitine acetylase is specific for short chain fatty acids. Carnitine acetylase seems to affect the flux through the pyruvate dehydrogenase complex. It may be involved as well in the transport of acetyl-CoA into mitochondria. The chain is Carnitine O-acetyltransferase, mitochondrial (CAT2) from Saccharomyces cerevisiae (strain ATCC 204508 / S288c) (Baker's yeast).